Here is a 645-residue protein sequence, read N- to C-terminus: Threonine--tRNA ligase (645 aa).

A TGS domain is found at 1–61 (MPAITLPDGS…SSDASVKFIT (61 aa)). The catalytic stretch occupies residues 243 to 536 (DHRRIGREMD…LIEQYAGKFP (294 aa)). Zn(2+)-binding residues include Cys336, His387, and His513.

The protein belongs to the class-II aminoacyl-tRNA synthetase family. Homodimer. It depends on Zn(2+) as a cofactor.

It is found in the cytoplasm. It carries out the reaction tRNA(Thr) + L-threonine + ATP = L-threonyl-tRNA(Thr) + AMP + diphosphate + H(+). Functionally, catalyzes the attachment of threonine to tRNA(Thr) in a two-step reaction: L-threonine is first activated by ATP to form Thr-AMP and then transferred to the acceptor end of tRNA(Thr). Also edits incorrectly charged L-seryl-tRNA(Thr). This chain is Threonine--tRNA ligase, found in Gluconobacter oxydans (strain 621H) (Gluconobacter suboxydans).